The following is a 121-amino-acid chain: Pro-glucagon (121 aa).

The N-terminal stretch at 1 to 21 (MKGAQYLAGLLLLLFVQNSIC) is a signal peptide. Residues 80 to 85 (SNGGSA) constitute a propeptide that is removed on maturation.

It belongs to the glucagon family.

It localises to the secreted. Functionally, plays a key role in glucose metabolism and homeostasis. Regulates blood glucose by increasing gluconeogenesis and decreasing glycolysis. This Carassius auratus (Goldfish) protein is Pro-glucagon (gcg).